We begin with the raw amino-acid sequence, 266 residues long: Tryptophan synthase alpha chain (266 aa).

Active-site proton acceptor residues include E47 and D58.

It belongs to the TrpA family. In terms of assembly, tetramer of two alpha and two beta chains.

It carries out the reaction (1S,2R)-1-C-(indol-3-yl)glycerol 3-phosphate + L-serine = D-glyceraldehyde 3-phosphate + L-tryptophan + H2O. Its pathway is amino-acid biosynthesis; L-tryptophan biosynthesis; L-tryptophan from chorismate: step 5/5. Functionally, the alpha subunit is responsible for the aldol cleavage of indoleglycerol phosphate to indole and glyceraldehyde 3-phosphate. This is Tryptophan synthase alpha chain from Leptospira biflexa serovar Patoc (strain Patoc 1 / Ames).